The sequence spans 85 residues: U4-theraphotoxin-Hhn1a (85 aa).

An N-terminal signal peptide occupies residues 1–22; sequence MKVTLIAILTCAAVLVLHTTAA. A propeptide spanning residues 23–48 is cleaved from the precursor; sequence EEFEAESQLMEVGMPDTELAAVDEER. Intrachain disulfides connect C52/C66, C56/C77, and C71/C82.

This sequence belongs to the neurotoxin 12 (Hwtx-2) family. 02 (Hwtx-2) subfamily. In terms of assembly, monomer. In terms of tissue distribution, expressed by the venom gland.

It localises to the secreted. Its function is as follows. Neurotoxin active on both insects and mammals. The chain is U4-theraphotoxin-Hhn1a from Cyriopagopus hainanus (Chinese bird spider).